We begin with the raw amino-acid sequence, 167 residues long: Ureidoglycolate lyase (167 aa).

Belongs to the ureidoglycolate lyase family. Homodimer. Requires Ni(2+) as cofactor.

The catalysed reaction is (S)-ureidoglycolate = urea + glyoxylate. It functions in the pathway nitrogen metabolism; (S)-allantoin degradation. Catalyzes the catabolism of the allantoin degradation intermediate (S)-ureidoglycolate, generating urea and glyoxylate. Involved in the utilization of allantoin as nitrogen source. The protein is Ureidoglycolate lyase of Pseudomonas putida (strain W619).